Reading from the N-terminus, the 605-residue chain is Exo-beta-1,3-glucanase (605 aa).

The disordered stretch occupies residues 1–23 (MHVPPTDPARSAPPASPHRRRRP). A signal peptide spans 1–44 (MHVPPTDPARSAPPASPHRRRRPKALGLTALAAAMLMAVPTTQA). Residues Q174, 194-196 (YGW), Q217, 446-449 (WRAD), and 480-481 (EH) each bind substrate. The active-site Proton donor is E502. Position 505 (Y505) interacts with substrate.

Belongs to the glycosyl hydrolase 55 family.

It localises to the secreted. The enzyme catalyses Successive hydrolysis of beta-D-glucose units from the non-reducing ends of (1-&gt;3)-beta-D-glucans, releasing alpha-glucose.. Its function is as follows. Exo-beta-1,3-glucanase that specifically hydrolyzes laminarin and laminarioligosaccharides, producing glucose and laminaribiose as end products. The polypeptide is Exo-beta-1,3-glucanase (Streptomyces sp. (strain SirexAA-E / ActE)).